Here is a 273-residue protein sequence, read N- to C-terminus: Eukaryotic translation initiation factor 3 subunit G-2 (273 aa).

Residues 165–193 (KYVPPFMKDGGGGPGGKNWGRGRERDDSS) form a disordered region. Residues 173 to 183 (DGGGGPGGKNW) show a composition bias toward gly residues. The RRM domain maps to 193–271 (SAVRISNLSE…LILCVEWSKP (79 aa)).

The protein belongs to the eIF-3 subunit G family. In terms of assembly, component of the eukaryotic translation initiation factor 3 (eIF-3) complex. The eIF-3 complex interacts with pix.

It localises to the cytoplasm. Functionally, RNA-binding component of the eukaryotic translation initiation factor 3 (eIF-3) complex, which is involved in protein synthesis of a specialized repertoire of mRNAs and, together with other initiation factors, stimulates binding of mRNA and methionyl-tRNAi to the 40S ribosome. The eIF-3 complex specifically targets and initiates translation of a subset of mRNAs involved in cell proliferation. This subunit can bind 18S rRNA. The chain is Eukaryotic translation initiation factor 3 subunit G-2 from Drosophila yakuba (Fruit fly).